The chain runs to 196 residues: Holliday junction branch migration complex subunit RuvA (196 aa).

The tract at residues 1-63 (MYDYIKGTLV…DDAHLLFGFH (63 aa)) is domain I. A domain II region spans residues 64–142 (TEDEKEVFLK…ELPAETTNTT (79 aa)). The interval 143-146 (ANQT) is flexible linker. Residues 147–196 (AGNQQLDEAMEALLALGYKSTELKKVKAFFEDTNETAEQYIKSALKMLMK) are domain III.

Belongs to the RuvA family. Homotetramer. Forms an RuvA(8)-RuvB(12)-Holliday junction (HJ) complex. HJ DNA is sandwiched between 2 RuvA tetramers; dsDNA enters through RuvA and exits via RuvB. An RuvB hexamer assembles on each DNA strand where it exits the tetramer. Each RuvB hexamer is contacted by two RuvA subunits (via domain III) on 2 adjacent RuvB subunits; this complex drives branch migration. In the full resolvosome a probable DNA-RuvA(4)-RuvB(12)-RuvC(2) complex forms which resolves the HJ.

The protein resides in the cytoplasm. Its function is as follows. The RuvA-RuvB-RuvC complex processes Holliday junction (HJ) DNA during genetic recombination and DNA repair, while the RuvA-RuvB complex plays an important role in the rescue of blocked DNA replication forks via replication fork reversal (RFR). RuvA specifically binds to HJ cruciform DNA, conferring on it an open structure. The RuvB hexamer acts as an ATP-dependent pump, pulling dsDNA into and through the RuvAB complex. HJ branch migration allows RuvC to scan DNA until it finds its consensus sequence, where it cleaves and resolves the cruciform DNA. This chain is Holliday junction branch migration complex subunit RuvA, found in Streptococcus thermophilus (strain CNRZ 1066).